The chain runs to 349 residues: MISEVLDDIIDKNRNLTVDEAYECMDDLVSGNYPNVVVSSFLTALRMKGETIDEITGLTRSMKNHAVQIDYKPEDYLIETCGTGGDTFKTFNVSTVASIIASAGGAKISKHGNRSVSSKFGGADALEALGVNIELSPEKVINSIDKCNFAFIFAPIYHVATKNVMMIRKQLKTRTVFNLLGPISCPTNVNARLTGIYDPELLETIAKVAMNLGVECGMIVHGFDENGNPAMDEISNIGKTKVAFIDNGDITVKYITPEDFGLSFSKPEDIVAPETPQEHIQIIYNILNNVTTTSQDRARLDLCLMNSASILYLTKKVDSLEEGVIYSRKLIEDGSAKKQLEKIIKYSNE.

5-phospho-alpha-D-ribose 1-diphosphate-binding positions include glycine 82, 85 to 86 (GD), threonine 90, 92 to 95 (NVST), 110 to 118 (KHGNRSVSS), and glycine 122. Glycine 82 is an anthranilate binding site. Serine 94 is a binding site for Mg(2+). Asparagine 113 contributes to the anthranilate binding site. Arginine 168 serves as a coordination point for anthranilate. Mg(2+)-binding residues include aspartate 232 and glutamate 233.

Belongs to the anthranilate phosphoribosyltransferase family. As to quaternary structure, homodimer. It depends on Mg(2+) as a cofactor.

It carries out the reaction N-(5-phospho-beta-D-ribosyl)anthranilate + diphosphate = 5-phospho-alpha-D-ribose 1-diphosphate + anthranilate. Its pathway is amino-acid biosynthesis; L-tryptophan biosynthesis; L-tryptophan from chorismate: step 2/5. Functionally, catalyzes the transfer of the phosphoribosyl group of 5-phosphorylribose-1-pyrophosphate (PRPP) to anthranilate to yield N-(5'-phosphoribosyl)-anthranilate (PRA). In Methanosphaera stadtmanae (strain ATCC 43021 / DSM 3091 / JCM 11832 / MCB-3), this protein is Anthranilate phosphoribosyltransferase.